The sequence spans 372 residues: Cyclin-dependent kinase 9 (372 aa).

The 297-residue stretch at 19 to 315 folds into the Protein kinase domain; it reads YEKLAKIGQG…SDDALNHDFF (297 aa). 25-33 contributes to the ATP binding site; that stretch reads IGQGTFGEV. Lysine 44 carries the post-translational modification N6-acetyllysine; by EP300/CBP, PCAF/KAT2B and GCN5/KAT2A. ATP is bound by residues lysine 48 and 104–106; that span reads DFC. An N6-acetyllysine; by PCAF/KAT2B and GCN5/KAT2A modification is found at lysine 48. The active-site Proton acceptor is aspartate 149. The tract at residues 166–191 is T-loop; it reads ADFGLARAFSLAKNSQPNRYTNRVVT. Aspartate 167 is an ATP binding site. Position 175 is a phosphoserine (serine 175). The residue at position 186 (threonine 186) is a Phosphothreonine; by CaMK1D. The interval 343-372 is disordered; sequence RRKGSQITQQSTNQSRNPATTNQTEFERVF. The residue at position 347 (serine 347) is a Phosphoserine; by CDK9 and PKA. The span at 347–366 shows a compositional bias: polar residues; the sequence is SQITQQSTNQSRNPATTNQT. Threonine 350 carries the phosphothreonine; by CDK9 modification. Phosphoserine; by CDK9 is present on serine 353. Threonine 354 bears the Phosphothreonine; by CDK9 mark. The residue at position 357 (serine 357) is a Phosphoserine; by CDK9. A phosphothreonine; by CDK9 mark is found at threonine 362 and threonine 363.

It belongs to the protein kinase superfamily. CMGC Ser/Thr protein kinase family. CDC2/CDKX subfamily. As to quaternary structure, component of the super elongation complex (SEC), at least composed of EAF1, EAF2, CDK9, MLLT3/AF9, AFF (AFF1 or AFF4), the P-TEFb complex and ELL (ELL, ELL2 or ELL3). Associates with CCNT1/cyclin-T1, CCNT2/cyclin-T2 (isoform A and isoform B) or CCNK/cyclin-K to form active P-TEFb. P-TEFb forms a complex with AFF4/AF5Q31 and is part of the super elongation complex (SEC). Component of a complex which is composed of at least 5 members: HTATSF1/Tat-SF1, P-TEFb complex, RNA pol II, SUPT5H, and NCL/nucleolin. Associates with UBR5 and forms a transcription regulatory complex composed of CDK9, RNAP II, UBR5 and TFIIS/TCEA1 that can stimulate target gene transcription (e.g. gamma fibrinogen/FGG) by recruiting their promoters. Component of the 7SK snRNP inactive complex which is composed of at least 8 members: P-TEFb (composed of CDK9 and CCNT1/cyclin-T1), HEXIM1, HEXIM2, LARP7, BCDIN3, SART3 proteins and 7SK and U6 snRNAs. This inactive 7SK snRNP complex can also interact with NCOR1 and HDAC3, probably to regulate CDK9 acetylation. Release of P-TEFb from P-TEFb/7SK snRNP complex requires both PP2B to transduce calcium Ca(2+) signaling in response to stimuli (e.g. UV or hexamethylene bisacetamide (HMBA)), and PPP1CA to dephosphorylate Thr-186. This released P-TEFb remains inactive in the pre-initiation complex with BRD4 until new Thr-186 phosphorylation occurs after the synthesis of a short RNA. Interacts with BRD4; to target chromatin binding. Interacts with JMJD6. Interacts with activated nuclear STAT3 and RELA/p65. Binds to AR and MYOD1. Forms a complex composed of CDK9, CCNT1/cyclin-T1, EP300 and GATA4 that stimulates hypertrophy in cardiomyocytes. The large PER complex involved in the repression of transcriptional termination is composed of at least PER2, CDK9, DDX5, DHX9, NCBP1 and POLR2A. Interacts with HSF1. Interacts with TBX21. Interacts with WDR43. Interacts with ZMYND8; the association appears to occur between homodimeric ZMYND8 and the activated form of the P-TEFb complex. In terms of processing, autophosphorylation at Thr-186, Ser-347, Thr-350, Ser-353, Thr-354 and Ser-357 triggers kinase activity by promoting cyclin and substrate binding upon conformational changes. Thr-186 phosphorylation requires the calcium Ca(2+) signaling pathway, including CaMK1D and calmodulin. This inhibition is relieved by Thr-29 dephosphorylation. Phosphorylation at Ser-175 inhibits kinase activity. Can be phosphorylated on either Thr-362 or Thr-363 but not on both simultaneously. Post-translationally, dephosphorylation of Thr-186 by PPM1A and PPM1B blocks CDK9 activity and may lead to CDK9 proteasomal degradation. However, PPP1CA-mediated Thr-186 dephosphorylation is required to release P-TEFb from its inactive P-TEFb/7SK snRNP complex. Dephosphorylated at Ser-347 by the PNUTS-PP1 complex during RNA polymerase II transcription pause-release. Dephosphorylation of C-terminus Thr and Ser residues by protein phosphatase-1 (PP1) triggers CDK9 activity. N6-acetylation of Lys-44 promotes kinase activity, whereas acetylation of both Lys-44 and Lys-48 mediated by PCAF/KAT2B and GCN5/KAT2A reduces kinase activity. The acetylated form associates with PML bodies in the nuclear matrix and with the transcriptionally silent HIV-1 genome; deacetylated upon transcription stimulation. Deacetylated by SIRT7, promoting the kinase activity and subsequent 'Ser-2' phosphorylation of the C-terminal domain (CTD) of RNA polymerase II. In terms of processing, polyubiquitinated and thus activated by UBR5. This ubiquitination is promoted by TFIIS/TCEA1 and favors 'Ser-2' phosphorylation of RPB1/POLR2A CTD.

It localises to the nucleus. The protein localises to the cytoplasm. It is found in the PML body. The enzyme catalyses L-seryl-[protein] + ATP = O-phospho-L-seryl-[protein] + ADP + H(+). The catalysed reaction is L-threonyl-[protein] + ATP = O-phospho-L-threonyl-[protein] + ADP + H(+). It carries out the reaction [DNA-directed RNA polymerase] + ATP = phospho-[DNA-directed RNA polymerase] + ADP + H(+). Activation by Thr-186 phosphorylation is calcium Ca(2+) signaling pathway-dependent; actively inactivated by dephosphorylation mediated by PPP1CA, PPM1A and PPM1B. Reversibly repressed by acetylation at Lys-44 and Lys-48. Protein kinase involved in the regulation of transcription. Member of the cyclin-dependent kinase pair (CDK9/cyclin-T) complex, also called positive transcription elongation factor b (P-TEFb), which facilitates the transition from abortive to productive elongation by phosphorylating the CTD (C-terminal domain) of the large subunit of RNA polymerase II (RNAP II) POLR2A, SUPT5H and RDBP. This complex is inactive when in the 7SK snRNP complex form. Phosphorylates EP300, MYOD1, RPB1/POLR2A and AR and the negative elongation factors DSIF and NELFE. Regulates cytokine inducible transcription networks by facilitating promoter recognition of target transcription factors (e.g. TNF-inducible RELA/p65 activation and IL-6-inducible STAT3 signaling). Promotes RNA synthesis in genetic programs for cell growth, differentiation and viral pathogenesis. P-TEFb is also involved in cotranscriptional histone modification, mRNA processing and mRNA export. Modulates a complex network of chromatin modifications including histone H2B monoubiquitination (H2Bub1), H3 lysine 4 trimethylation (H3K4me3) and H3K36me3; integrates phosphorylation during transcription with chromatin modifications to control co-transcriptional histone mRNA processing. The CDK9/cyclin-K complex has also a kinase activity towards CTD of RNAP II and can substitute for CDK9/cyclin-T P-TEFb in vitro. Replication stress response protein; the CDK9/cyclin-K complex is required for genome integrity maintenance, by promoting cell cycle recovery from replication arrest and limiting single-stranded DNA amount in response to replication stress, thus reducing the breakdown of stalled replication forks and avoiding DNA damage. In addition, probable function in DNA repair of isoform 2 via interaction with KU70/XRCC6. Promotes cardiac myocyte enlargement. RPB1/POLR2A phosphorylation on 'Ser-2' in CTD activates transcription. AR phosphorylation modulates AR transcription factor promoter selectivity and cell growth. DSIF and NELF phosphorylation promotes transcription by inhibiting their negative effect. The phosphorylation of MYOD1 enhances its transcriptional activity and thus promotes muscle differentiation. Catalyzes phosphorylation of KAT5, promoting KAT5 recruitment to chromatin and histone acetyltransferase activity. This chain is Cyclin-dependent kinase 9 (CDK9), found in Bos taurus (Bovine).